We begin with the raw amino-acid sequence, 564 residues long: MSEITLGRYLFERLKQVEVQTIFGLPGDFNLSLLDKIYEVPGMRWAGNANELNAAYAADGYARLKGMACVITTFGVGELSALNGIAGSYAEHVGVLHVVGVPSISSQAKQLLLHHTLGNGDFTVFHRMSSNISETTAMITDINSAPSEIDRCIRTTYISQRPVYLGLPANLVDLKVPASLLETPIDLSLKPNDPEAENEVLETVLELIKDAKNPVILADACCSRHNVKAETKKLIDITQFPAFVTPMGKGSIDEQHPRFGGVYVGTLSSPEVKEAVESADLVLSVGALLSDFNTGSFSYSYKTKNIVEFHSDYIKVRNATFPGVQMKFVLQKLLTKVKDAAKGYKPVPVPHAPRDNKPVADSTPLKQEWVWTQVGKFLQEGDVVLTETGTSAFGINQTHFPNDTYGISQVLWGSIGFTGGATLGAAFAAEEIDPKKRVILFIGDGSLQLTVQEISTMIRWGLKPYLFVLNNDGYTIERLIHGETAQYNCIQSWKHLDLLPTFGAKDYEAVRVATTGEWNKLTTDKKFQENSKIRLIEVMLPVMDAPSNLVKQAQLTASINAKQE.

Positions 28 and 115 each coordinate pyruvate. Residues Thr390 and 413–415 contribute to the thiamine diphosphate site; that span reads GSI. Mg(2+) is bound at residue Asp444. Thiamine diphosphate is bound by residues 445–446 and 471–476; these read GS and NDGYTI. Mg(2+) contacts are provided by Asn471 and Gly473. Glu477 is a binding site for pyruvate.

Belongs to the TPP enzyme family. As to quaternary structure, homotetramer. Mg(2+) serves as cofactor. The cofactor is thiamine diphosphate.

It catalyses the reaction a 2-oxocarboxylate + H(+) = an aldehyde + CO2. It carries out the reaction pyruvate + H(+) = acetaldehyde + CO2. The protein is Pyruvate decarboxylase (PDC1) of Kluyveromyces marxianus (Yeast).